The following is a 230-amino-acid chain: uncharacterized protein (230 aa).

The next 7 helical transmembrane spans lie at F34–Q54, V56–F76, M87–I107, G111–V131, M146–S166, P167–Y187, and V205–F225.

The protein belongs to the BI1 family.

The protein resides in the cell membrane. This is an uncharacterized protein from Helicobacter pylori (strain ATCC 700392 / 26695) (Campylobacter pylori).